A 223-amino-acid chain; its full sequence is Thiamine-phosphate synthase (223 aa).

4-amino-2-methyl-5-(diphosphooxymethyl)pyrimidine-binding positions include 42–46 and Asn-83; that span reads QLRDK. Asp-84 and Asp-103 together coordinate Mg(2+). Ser-122 provides a ligand contact to 4-amino-2-methyl-5-(diphosphooxymethyl)pyrimidine. Position 148–150 (148–150) interacts with 2-[(2R,5Z)-2-carboxy-4-methylthiazol-5(2H)-ylidene]ethyl phosphate; that stretch reads TPT. Lys-151 is a binding site for 4-amino-2-methyl-5-(diphosphooxymethyl)pyrimidine. Residue Gly-179 participates in 2-[(2R,5Z)-2-carboxy-4-methylthiazol-5(2H)-ylidene]ethyl phosphate binding.

Belongs to the thiamine-phosphate synthase family. It depends on Mg(2+) as a cofactor.

The catalysed reaction is 2-[(2R,5Z)-2-carboxy-4-methylthiazol-5(2H)-ylidene]ethyl phosphate + 4-amino-2-methyl-5-(diphosphooxymethyl)pyrimidine + 2 H(+) = thiamine phosphate + CO2 + diphosphate. It carries out the reaction 2-(2-carboxy-4-methylthiazol-5-yl)ethyl phosphate + 4-amino-2-methyl-5-(diphosphooxymethyl)pyrimidine + 2 H(+) = thiamine phosphate + CO2 + diphosphate. It catalyses the reaction 4-methyl-5-(2-phosphooxyethyl)-thiazole + 4-amino-2-methyl-5-(diphosphooxymethyl)pyrimidine + H(+) = thiamine phosphate + diphosphate. The protein operates within cofactor biosynthesis; thiamine diphosphate biosynthesis; thiamine phosphate from 4-amino-2-methyl-5-diphosphomethylpyrimidine and 4-methyl-5-(2-phosphoethyl)-thiazole: step 1/1. Its function is as follows. Condenses 4-methyl-5-(beta-hydroxyethyl)thiazole monophosphate (THZ-P) and 2-methyl-4-amino-5-hydroxymethyl pyrimidine pyrophosphate (HMP-PP) to form thiamine monophosphate (TMP). In Mycolicibacterium paratuberculosis (strain ATCC BAA-968 / K-10) (Mycobacterium paratuberculosis), this protein is Thiamine-phosphate synthase.